Here is a 310-residue protein sequence, read N- to C-terminus: Vomeronasal type-1 receptor 93 (310 aa).

Residues 1 to 20 (MNKDNTLHVDTIMKITMFSE) are Extracellular-facing. A helical membrane pass occupies residues 21 to 41 (VSVGILANSILFFAHLCMLLG). The Cytoplasmic portion of the chain corresponds to 42–59 (ENKPKPIHLYIASLSLTQ). A helical transmembrane segment spans residues 60-80 (LMLLITMGLIAADMFISQGIW). Over 81-93 (DSTSCQSLIYLHR) the chain is Extracellular. An intrachain disulfide couples Cys-85 to Cys-172. The helical transmembrane segment at 94–114 (LSRGFTLSAACLLNVFWMITL) threads the bilayer. Topologically, residues 115–134 (SSKKSRLTKFKHNSPHHISG) are cytoplasmic. Residues 135 to 155 (AFLLLCVLYMCFSSHLILSII) traverse the membrane as a helical segment. Topologically, residues 156-193 (ATPNLTSDNFMYVTKSCSFLPMCYSRTSMFSTTIAVRE) are extracellular. Asn-159 is a glycosylation site (N-linked (GlcNAc...) asparagine). Residues 194–214 (AFFIGLMALSSGYLVAFLWRH) form a helical membrane-spanning segment. The Cytoplasmic portion of the chain corresponds to 215-238 (RKQAQHLHSTGLSSKASPEQRATE). Residues 239-259 (TILLLMSFFVVLYILENVVFY) form a helical membrane-spanning segment. At 260–269 (SRMKFKDGST) the chain is on the extracellular side. The chain crosses the membrane as a helical span at residues 270–290 (FYCVQIIVSHSYATVSSFVFI). The Cytoplasmic segment spans residues 291-310 (FTEKRMTKILRSVCTRIINI).

Belongs to the G-protein coupled receptor 1 family. As to expression, expressed in 1-4% of neurons of the vomeronasal organ. Only one pheromone receptor gene may be expressed in a particular neuron. Not expressed in the main olfactory epithelium.

The protein resides in the cell membrane. Putative pheromone receptor implicated in the regulation of social as well as reproductive behavior. The protein is Vomeronasal type-1 receptor 93 (Vom1r93) of Rattus norvegicus (Rat).